The following is a 37-amino-acid chain: Large ribosomal subunit protein bL36 (37 aa).

It belongs to the bacterial ribosomal protein bL36 family.

This is Large ribosomal subunit protein bL36 from Desulforudis audaxviator (strain MP104C).